Consider the following 186-residue polypeptide: Crossover junction endodeoxyribonuclease RuvC (186 aa).

Catalysis depends on residues aspartate 14, glutamate 73, and aspartate 145. Mg(2+)-binding residues include aspartate 14, glutamate 73, and aspartate 145. The segment at 162–186 (GRSLPPSRGRRRSGSRQRWRDYRPS) is disordered. Residues 169–178 (RGRRRSGSRQ) show a composition bias toward basic residues.

Belongs to the RuvC family. Homodimer which binds Holliday junction (HJ) DNA. The HJ becomes 2-fold symmetrical on binding to RuvC with unstacked arms; it has a different conformation from HJ DNA in complex with RuvA. In the full resolvosome a probable DNA-RuvA(4)-RuvB(12)-RuvC(2) complex forms which resolves the HJ. Mg(2+) is required as a cofactor.

The protein resides in the cytoplasm. The enzyme catalyses Endonucleolytic cleavage at a junction such as a reciprocal single-stranded crossover between two homologous DNA duplexes (Holliday junction).. In terms of biological role, the RuvA-RuvB-RuvC complex processes Holliday junction (HJ) DNA during genetic recombination and DNA repair. Endonuclease that resolves HJ intermediates. Cleaves cruciform DNA by making single-stranded nicks across the HJ at symmetrical positions within the homologous arms, yielding a 5'-phosphate and a 3'-hydroxyl group; requires a central core of homology in the junction. The consensus cleavage sequence is 5'-(A/T)TT(C/G)-3'. Cleavage occurs on the 3'-side of the TT dinucleotide at the point of strand exchange. HJ branch migration catalyzed by RuvA-RuvB allows RuvC to scan DNA until it finds its consensus sequence, where it cleaves and resolves the cruciform DNA. The protein is Crossover junction endodeoxyribonuclease RuvC of Chromohalobacter salexigens (strain ATCC BAA-138 / DSM 3043 / CIP 106854 / NCIMB 13768 / 1H11).